A 379-amino-acid chain; its full sequence is (R)-2-hydroxyglutaryl-CoA dehydratase, subunit beta (379 aa).

The protein belongs to the FldB/FldC dehydratase alpha/beta subunit family. In terms of assembly, the (R)-2-hydroxyglutaryl-CoA dehydratase enzyme system is a heterodimer composed of an alpha subunit (HgdA) and a beta subunit (HgdB). The cofactor is [4Fe-4S] cluster. Requires FMN as cofactor. Mg(2+) serves as cofactor.

It localises to the cytoplasm. The catalysed reaction is (R)-2-hydroxyglutaryl-CoA = (2E)-glutaconyl-CoA + H2O. It functions in the pathway amino-acid degradation; L-glutamate degradation via hydroxyglutarate pathway; crotonoyl-CoA from L-glutamate: step 4/5. Its activity is regulated as follows. Activated by the HgdC. Reversibly inactivated by oxidants such as 2-nitrophenol, 3-nitrophenol, 4-nitrophenol, 4-nitrobenzoate, carbonyl cyanide 4-(trifluoromethoxy)phenylhydrazone (FCCP) and chloramphenicol. Irreversibly inactivated by oxidants such as hydroxylamine and nitrite. In terms of biological role, involved in the fermentation of L-glutamate via the hydroxyglutarate pathway. Catalyzes the reversible syn-elimination of water from (R)-2-hydroxyglutaryl-CoA to yield (E)-glutaconyl-CoA. The dehydration mechanism involves a transient one electron reduction of the thioester from (R)-2-hydroxyglutaryl-CoA, generating a ketyl radical. Prior to (E)-glutaconyl-CoA formation, the ketyl radical is subsequently reoxidized by electron transfer back to the HgdA-HgdB complex (CompD) to avoid change in oxidation state of the substrate. The appropriate redox state of dehydratase HgdA-HgdB complex (CompD) is maintained by HgdC (CompA) via hydrolysis of ATP and ATP-dependent electron transfer. Since the electron is recycled, the dehydratase is able to perform several turnovers with only catalytic amounts of ATP and substoichiometric amounts of HgdC (CompA). This chain is (R)-2-hydroxyglutaryl-CoA dehydratase, subunit beta, found in Acidaminococcus fermentans (strain ATCC 25085 / DSM 20731 / CCUG 9996 / CIP 106432 / VR4).